The sequence spans 407 residues: Putative ammonium transporter MTH_661 (407 aa).

12 helical membrane passes run 9–29, 47–67, 70–90, 101–121, 129–149, 162–182, 196–216, 226–246, 257–277, 279–299, 312–332, and 357–377; these read AWMLISTALVILMTVPGVAMF, FVSLGIVSLLWFLFGYGLIFG, VSGIIGSHQVGISLINLGSAS, FAIFQMTFAAITVALISGAVV, WILFIPLWFALVYVPVAHWVW, FAGGIVVHITSGIAALALALV, LGYSVIGTGLLWFGWFGFNAG, ANAMIVTNTSAAAGMIGWILM, LGALSGAVAGLASITPAAGFV, IGASIVTGLVAAVICYLAVSW, VFGIHGVSGIIGTLGVGLFAV, and IGVVTVTVYTFVVTYILAMLL.

Belongs to the ammonia transporter channel (TC 1.A.11.2) family.

The protein resides in the cell membrane. The sequence is that of Putative ammonium transporter MTH_661 from Methanothermobacter thermautotrophicus (strain ATCC 29096 / DSM 1053 / JCM 10044 / NBRC 100330 / Delta H) (Methanobacterium thermoautotrophicum).